We begin with the raw amino-acid sequence, 214 residues long: Adenylate kinase (214 aa).

10–15 (GAGKGT) is an ATP binding site. The interval 30–59 (STGDMLRAAIKAGTELGKQAKAVIDAGQLV) is NMP. AMP is bound by residues Thr31, Arg36, 57–59 (QLV), 85–88 (GFPR), and Gln92. The interval 122-159 (GRRAHLPSGRTYHVVYNPPKVEGKDDVTGEDLVVRDDD) is LID. ATP-binding positions include Arg123 and 132 to 133 (TY). Arg156 and Arg167 together coordinate AMP. Lys200 provides a ligand contact to ATP.

Belongs to the adenylate kinase family. As to quaternary structure, monomer.

It localises to the cytoplasm. It catalyses the reaction AMP + ATP = 2 ADP. The protein operates within purine metabolism; AMP biosynthesis via salvage pathway; AMP from ADP: step 1/1. Its function is as follows. Catalyzes the reversible transfer of the terminal phosphate group between ATP and AMP. Plays an important role in cellular energy homeostasis and in adenine nucleotide metabolism. This chain is Adenylate kinase, found in Vibrio vulnificus (strain YJ016).